A 456-amino-acid chain; its full sequence is Serine/threonine-protein kinase PBS1 (456 aa).

A disordered region spans residues Met-1–Arg-57. Gly-2 carries the N-myristoyl glycine lipid modification. Residues Cys-3 and Cys-6 are each lipidated (S-palmitoyl cysteine). The span at Asp-12–His-23 shows a compositional bias: basic and acidic residues. Ser-21 carries the phosphoserine modification. Positions Lys-27–Gly-39 are enriched in polar residues. Positions Phe-86–Leu-363 constitute a Protein kinase domain. ATP is bound by residues Leu-92–Val-100 and Lys-115. Phosphotyrosine is present on Tyr-160. The Proton acceptor role is filled by Asp-213. A phosphoserine mark is found at Ser-217 and Ser-247. Thr-248 and Thr-253 each carry phosphothreonine. Tyr-261 carries the post-translational modification Phosphotyrosine. Positions Ser-292–His-296 match the Recognition motif required for RPS5-mediated plant resistance to P.syringae motif. The interval Tyr-368 to Gly-456 is disordered. Basic and acidic residues-rich tracts occupy residues Pro-370 to Asp-392 and Phe-400 to Ala-429. Positions Glu-446–Gly-456 are enriched in polar residues.

It belongs to the protein kinase superfamily. Ser/Thr protein kinase family. In infected plant cells, it interacts with the P.syringae virulence protein avrPphB. In uninfected plants, autophosphorylated form interacts with RPS5. Interacts with FLS2. Post-translationally, cleaved by avrPphB in infected plant cells. Its cleavage serves as a signal that triggers the RPS5-mediated defense system. In terms of processing, autophosphorylates. Autophosphorylation may be required to trigger the RPS5-mediated plant defense system. Palmitoylation at Cys-3 and Cys-6 are required for plasma membrane location that is essential for the RPS5-mediated plant defense response.

The protein resides in the cell membrane. The catalysed reaction is L-seryl-[protein] + ATP = O-phospho-L-seryl-[protein] + ADP + H(+). It carries out the reaction L-threonyl-[protein] + ATP = O-phospho-L-threonyl-[protein] + ADP + H(+). Functionally, protein kinase required for plant defense mechanism mediated by the disease resistance (R) protein RPS5. In case of infection by Pseudomonas syringae, AvrPphB triggers RPS5-mediated defense mechanism via the cleavage of PBS1. Both kinase activity and cleavage by avrPphB are independently required to trigger the RPS5-mediated resistance. Contributes to PAMP-triggered immunity (PTI) signaling and defense responses downstream of FLS2. This is Serine/threonine-protein kinase PBS1 from Arabidopsis thaliana (Mouse-ear cress).